A 438-amino-acid chain; its full sequence is Methylenetetrahydrofolate--tRNA-(uracil-5-)-methyltransferase TrmFO 2 (438 aa).

An FAD-binding site is contributed by 9–14 (GAGLAG).

It belongs to the MnmG family. TrmFO subfamily. FAD is required as a cofactor.

It localises to the cytoplasm. It catalyses the reaction uridine(54) in tRNA + (6R)-5,10-methylene-5,6,7,8-tetrahydrofolate + NADH + H(+) = 5-methyluridine(54) in tRNA + (6S)-5,6,7,8-tetrahydrofolate + NAD(+). It carries out the reaction uridine(54) in tRNA + (6R)-5,10-methylene-5,6,7,8-tetrahydrofolate + NADPH + H(+) = 5-methyluridine(54) in tRNA + (6S)-5,6,7,8-tetrahydrofolate + NADP(+). Catalyzes the folate-dependent formation of 5-methyl-uridine at position 54 (M-5-U54) in all tRNAs. In Mycoplasma mycoides subsp. mycoides SC (strain CCUG 32753 / NCTC 10114 / PG1), this protein is Methylenetetrahydrofolate--tRNA-(uracil-5-)-methyltransferase TrmFO 2.